Consider the following 350-residue polypeptide: Inhibin beta E chain (350 aa).

The N-terminal stretch at 1 to 21 (MGLSNVQLWTILLWALAWVQS) is a signal peptide. Positions 22–236 (TRSACPSCGA…EPGAGRARRR (215 aa)) are excised as a propeptide. Asparagine 198 carries an N-linked (GlcNAc...) asparagine glycan. 4 cysteine pairs are disulfide-bonded: cysteine 240–cysteine 248, cysteine 247–cysteine 315, cysteine 276–cysteine 347, and cysteine 280–cysteine 349.

This sequence belongs to the TGF-beta family. Homodimeric or heterodimeric through association with alpha and beta subunits, linked by one or more disulfide bonds. Inhibins are heterodimers of one alpha and one beta subunit. Activins are homo- or heterodimers of beta subunits only.

It localises to the secreted. Functionally, inhibins and activins inhibit and activate, respectively, the secretion of follitropin by the pituitary gland. Inhibins/activins are involved in regulating a number of diverse functions such as hypothalamic and pituitary hormone secretion, gonadal hormone secretion, germ cell development and maturation, erythroid differentiation, insulin secretion, nerve cell survival, embryonic axial development or bone growth, depending on their subunit composition. Inhibins appear to oppose the functions of activins. Activin E is a homodimer of INHBE secreted by the liver that plays a crucial role in regulating metabolic homeostasis particularly in lipid metabolism and energy homeostasis. Plays a central role in the regulation of adipose tissue lipolysis by preventing the influx of fatty acids from adipose tissue into the liver. Mechanistically, signals via ACVR1C to activate SMAD2/3 signaling, suppressing PPARG target genes in adipose tissue, thereby reducing liver lipid content and improving glycemic control. Induces beige adipocyte formation and thermogenesis in response to cold exposure. In Rattus norvegicus (Rat), this protein is Inhibin beta E chain (Inhbe).